The sequence spans 1260 residues: Paraclostridial mosquitocidal protein 1 (1260 aa).

Histidine 208 contributes to the Zn(2+) binding site. Glutamate 209 serves as the catalytic Proton acceptor. Positions 212 and 248 each coordinate Zn(2+). An intrachain disulfide couples cysteine 395 to cysteine 406. The translocation domain (TD) stretch occupies residues 401–824 (NRVNICIDVN…NIQSIPDFDI (424 aa)). The segment at 825-1065 (NALIDRLGIQ…SYFNSNILRD (241 aa)) is HCN. The segment at 1066-1260 (FWGEPLEYNK…FVSEDEGWKE (195 aa)) is HCC.

It belongs to the peptidase M27 family. Zn(2+) serves as cofactor.

It catalyses the reaction Limited hydrolysis of proteins of the neuroexocytosis apparatus, synaptobrevins, SNAP25 or syntaxin. No detected action on small molecule substrates.. With respect to regulation, preincubation with the metalloprotease inhibitor 1,10-phenanthroline before injection into Anopheles or Aedes decreases toxicity. Its function is as follows. Neurotoxin active against Anopheles but not Aedes mosquitoes upon oral ingestion; expression of the ptox operon (ntnh-orfX1-orfX2-orfX3-pmp1) in B.thuringiensis kills Anopheles but not Aedes mosquito 3rd instar larvae. The ntnh-pmp1 construct is about half as toxic. PMP1 is toxic when injected directly into Anopheles or Aedes mosquito 3rd instar larvae, larvae no longer move, suggesting they are paralyzed. Adult mosquitoes (Anopheles or Aedes) and Drosophila lose the ability to fly in a dose-dependent manner by 24 hours after injection with 100 pg neurotoxin. Not toxic upon injection in mice. Functionally, neurotoxin that cleaves A.gambiae syntaxin 1a, probably hydrolyzing the '240-Glu-|-His-241' bond. Does not cleave A.gambiae n-synaptobrevin or SNAP-25, nor human syntaxin 1A. Responsible for host epithelial cell transcytosis, host nerve cell targeting and translocation of PMP1 light chain (LC) into host cytosol. Composed of 3 subdomains; the translocation domain (TD), and N-terminus and C-terminus of the receptor-binding domain (RBD), called HCN and HCC. In Paraclostridium bifermentans (Clostridium bifermentans), this protein is Paraclostridial mosquitocidal protein 1.